Here is a 151-residue protein sequence, read N- to C-terminus: MGRMHSKGKGIASSALPYVRSPPAWCKADADSVVEQILKFSKKGMSPSQIGVTLRDSHGIPQVRFITGQKIMRILKANGLAPELPEDLYNLIKKAVSVRKHLERNRKDKDSKFRLILIESRIHRLARYYRKVGALPPTWKYESATASALVA.

A phosphoserine mark is found at S21 and S32.

This sequence belongs to the universal ribosomal protein uS15 family. As to quaternary structure, component of the small ribosomal subunit (SSU). Mature yeast ribosomes consist of a small (40S) and a large (60S) subunit. The 40S small subunit contains 1 molecule of ribosomal RNA (18S rRNA) and at least 33 different proteins. The large 60S subunit contains 3 rRNA molecules (25S, 5.8S and 5S rRNA) and at least 46 different proteins.

The protein resides in the cytoplasm. In terms of biological role, component of the ribosome, a large ribonucleoprotein complex responsible for the synthesis of proteins in the cell. The small ribosomal subunit (SSU) binds messenger RNAs (mRNAs) and translates the encoded message by selecting cognate aminoacyl-transfer RNA (tRNA) molecules. The large subunit (LSU) contains the ribosomal catalytic site termed the peptidyl transferase center (PTC), which catalyzes the formation of peptide bonds, thereby polymerizing the amino acids delivered by tRNAs into a polypeptide chain. The nascent polypeptides leave the ribosome through a tunnel in the LSU and interact with protein factors that function in enzymatic processing, targeting, and the membrane insertion of nascent chains at the exit of the ribosomal tunnel. This Schizosaccharomyces pombe (strain 972 / ATCC 24843) (Fission yeast) protein is Small ribosomal subunit protein uS15 (rps13).